The sequence spans 583 residues: 15-cis-phytoene desaturase, chloroplastic/chromoplastic (583 aa).

A chloroplast and chromoplast-targeting transit peptide spans 1-111 (MPQIGLVSAV…FRASPRPTKP (111 aa)). FAD-binding positions include 118–134 (GAGL…ADAG), 141–142 (EA), Lys-149, 166–167 (HI), and Tyr-172. Arg-307 contacts substrate. Ile-349 and Asp-538 together coordinate FAD. Ala-546 is a binding site for substrate. Met-548 serves as a coordination point for FAD.

This sequence belongs to the carotenoid/retinoid oxidoreductase family. As to quaternary structure, homotetramer. FAD is required as a cofactor.

It is found in the plastid. Its subcellular location is the chloroplast. The protein localises to the chromoplast. The protein resides in the membrane. It carries out the reaction 2 a plastoquinone + 15-cis-phytoene = 9,9',15-tri-cis-zeta-carotene + 2 a plastoquinol. It functions in the pathway carotenoid biosynthesis; lycopene biosynthesis. Functionally, converts phytoene into zeta-carotene via the intermediary of phytofluene by the symmetrical introduction of two double bonds at the C-11 and C-11' positions of phytoene with a concomitant isomerization of two neighboring double bonds at the C9 and C9' positions from trans to cis. The protein is 15-cis-phytoene desaturase, chloroplastic/chromoplastic (PDS) of Solanum lycopersicum (Tomato).